A 226-amino-acid polypeptide reads, in one-letter code: Thymidylate kinase (226 aa).

16-23 (GIDGAGKT) lines the ATP pocket.

It belongs to the thymidylate kinase family.

The enzyme catalyses dTMP + ATP = dTDP + ADP. Functionally, phosphorylation of dTMP to form dTDP in both de novo and salvage pathways of dTTP synthesis. This chain is Thymidylate kinase, found in Xanthomonas euvesicatoria pv. vesicatoria (strain 85-10) (Xanthomonas campestris pv. vesicatoria).